Consider the following 189-residue polypeptide: Peptidyl-tRNA hydrolase (189 aa).

Tyrosine 15 contributes to the tRNA binding site. Residue histidine 20 is the Proton acceptor of the active site. Residues phenylalanine 66, asparagine 68, and asparagine 114 each contribute to the tRNA site.

Belongs to the PTH family. Monomer.

It localises to the cytoplasm. It carries out the reaction an N-acyl-L-alpha-aminoacyl-tRNA + H2O = an N-acyl-L-amino acid + a tRNA + H(+). Hydrolyzes ribosome-free peptidyl-tRNAs (with 1 or more amino acids incorporated), which drop off the ribosome during protein synthesis, or as a result of ribosome stalling. Its function is as follows. Catalyzes the release of premature peptidyl moieties from peptidyl-tRNA molecules trapped in stalled 50S ribosomal subunits, and thus maintains levels of free tRNAs and 50S ribosomes. In Streptococcus pyogenes serotype M1, this protein is Peptidyl-tRNA hydrolase.